The primary structure comprises 312 residues: MTSCVAKEPIKKIAIFGGTHGNELTGVFLVTHWLRNGTEVHRAGLDVKPFITNPRAVEKCTRYIDCDLNRVFDLENLSKEMSEDLPYEVRRAQEINHLFGPKNSDDAYDLVFDLHNTTSNMGCTLILEDSRNDFLIQMFHYIKTCMAPLPCSVYLIEHPSLKYATTRSIAKYPVGIEVGPQPHGVLRADILDQMRKMIKHALDFIQHFNEGKEFPPCSIDVYKIMEKVDYPRNESGDMAAVIHPNLQDQDWKPLHPGDPVFVSLDGKVIPLGGDCTVYPVFVNEAAYYEKKEAFAKTTKLTLSAKSIRSTLH.

Positions 20 and 23 each coordinate Zn(2+). N-acetyl-L-aspartate is bound by residues Arg-62, Asn-69, and Arg-70. A Zn(2+)-binding site is contributed by His-115. N-acetyl-L-aspartate-binding residues include Tyr-163 and Arg-167. The active-site Proton donor/acceptor is the Glu-177. An N-acetyl-L-aspartate-binding site is contributed by Tyr-287.

The protein belongs to the AspA/AstE family. Aspartoacylase subfamily. In terms of assembly, homodimer. It depends on Zn(2+) as a cofactor.

The protein resides in the cytoplasm. It localises to the nucleus. The catalysed reaction is an N-acyl-L-aspartate + H2O = a carboxylate + L-aspartate. It catalyses the reaction N-acetyl-L-aspartate + H2O = L-aspartate + acetate. Its function is as follows. Catalyzes the deacetylation of N-acetylaspartic acid (NAA) to produce acetate and L-aspartate. NAA occurs in high concentration in brain and its hydrolysis NAA plays a significant part in the maintenance of intact white matter. In other tissues it acts as a scavenger of NAA from body fluids. The polypeptide is Aspartoacylase (Mus musculus (Mouse)).